Consider the following 198-residue polypeptide: Recombination protein RecR (198 aa).

Residues 57-72 (CSVCGHITENDPCYIC) form a C4-type zinc finger. The 96-residue stretch at 80–175 (SVICVVEDDK…KVTRLAQGLS (96 aa)) folds into the Toprim domain.

It belongs to the RecR family.

May play a role in DNA repair. It seems to be involved in an RecBC-independent recombinational process of DNA repair. It may act with RecF and RecO. The chain is Recombination protein RecR from Staphylococcus epidermidis (strain ATCC 35984 / DSM 28319 / BCRC 17069 / CCUG 31568 / BM 3577 / RP62A).